The following is a 260-amino-acid chain: MLKFYDKTVTSRLLIGTALYPSPAIMQDAIRASGAEIVTVSLRREAAGGKTGDAFWKLINELNVTVLPNTAGCRSVREAVTTAKLARELFGTSWIKLEVIGDNDTLQPDVIGLVEAATILIKDGFEVFPYCTEDLTVATRLVDAGCRVVMPWAAPIGSAKGIINRDALKLLRDRLPDITLVVDAGLGAPSHAAGALELGYDAVLLNTAIAKAADPVAMARAFRLGVEAGRTAYEAGLMDARDFASPSTPVVGTPFWHAVS.

K96 acts as the Schiff-base intermediate with DXP in catalysis. Residues G157, 184–185, and 206–207 each bind 1-deoxy-D-xylulose 5-phosphate; these read AG and NT.

This sequence belongs to the ThiG family. Homotetramer. Forms heterodimers with either ThiH or ThiS.

Its subcellular location is the cytoplasm. It carries out the reaction [ThiS sulfur-carrier protein]-C-terminal-Gly-aminoethanethioate + 2-iminoacetate + 1-deoxy-D-xylulose 5-phosphate = [ThiS sulfur-carrier protein]-C-terminal Gly-Gly + 2-[(2R,5Z)-2-carboxy-4-methylthiazol-5(2H)-ylidene]ethyl phosphate + 2 H2O + H(+). The protein operates within cofactor biosynthesis; thiamine diphosphate biosynthesis. Catalyzes the rearrangement of 1-deoxy-D-xylulose 5-phosphate (DXP) to produce the thiazole phosphate moiety of thiamine. Sulfur is provided by the thiocarboxylate moiety of the carrier protein ThiS. In vitro, sulfur can be provided by H(2)S. In Bradyrhizobium sp. (strain ORS 278), this protein is Thiazole synthase.